The sequence spans 269 residues: Undecaprenyl-diphosphatase (269 aa).

7 consecutive transmembrane segments (helical) span residues 40-59 (GITF…ALYF), 87-107 (WYII…EEPI), 116-136 (AIIA…DTLG), 160-180 (ALLP…FLGF), 188-208 (FSFL…VGHL), 220-240 (PLLI…ALLL), and 247-267 (SLYP…LFIF).

This sequence belongs to the UppP family.

The protein localises to the cell inner membrane. It catalyses the reaction di-trans,octa-cis-undecaprenyl diphosphate + H2O = di-trans,octa-cis-undecaprenyl phosphate + phosphate + H(+). In terms of biological role, catalyzes the dephosphorylation of undecaprenyl diphosphate (UPP). Confers resistance to bacitracin. In Geobacter metallireducens (strain ATCC 53774 / DSM 7210 / GS-15), this protein is Undecaprenyl-diphosphatase.